A 378-amino-acid polypeptide reads, in one-letter code: L-lactate dehydrogenase (378 aa).

The 378-residue stretch at 1–378 (MIISASTDYR…ELSRDSLVKR (378 aa)) folds into the FMN hydroxy acid dehydrogenase domain. Y24 contributes to the substrate binding site. Positions 106 and 127 each coordinate FMN. Y129 provides a ligand contact to substrate. An FMN-binding site is contributed by T155. R164 contributes to the substrate binding site. K251 contacts FMN. The active-site Proton acceptor is the H275. Substrate is bound at residue R278. An FMN-binding site is contributed by 306–330 (DSGIRTGLDVVRMLALGADCTMLGR).

The protein belongs to the FMN-dependent alpha-hydroxy acid dehydrogenase family. FMN is required as a cofactor.

The protein localises to the cell inner membrane. The catalysed reaction is (S)-lactate + A = pyruvate + AH2. In terms of biological role, catalyzes the conversion of L-lactate to pyruvate. Is coupled to the respiratory chain. The protein is L-lactate dehydrogenase of Vibrio cholerae serotype O1 (strain ATCC 39315 / El Tor Inaba N16961).